Here is a 215-residue protein sequence, read N- to C-terminus: UPF0441 protein SG0265 (215 aa).

This sequence belongs to the UPF0441 family.

In Sodalis glossinidius (strain morsitans), this protein is UPF0441 protein SG0265.